Reading from the N-terminus, the 430-residue chain is Adenylosuccinate synthetase (430 aa).

Residues 12–18 and 40–42 contribute to the GTP site; these read GDEGKGK and GHT. The active-site Proton acceptor is D13. 2 residues coordinate Mg(2+): D13 and G40. IMP is bound by residues 13-16, 38-41, T130, R144, Q224, T239, and R303; these read DEGK and NAGH. Catalysis depends on H41, which acts as the Proton donor. Substrate is bound at residue 299 to 305; the sequence is TNTGRPR. GTP is bound by residues R305, 331-333, and 413-415; these read KLD and STS.

Belongs to the adenylosuccinate synthetase family. As to quaternary structure, homodimer. Mg(2+) serves as cofactor.

It localises to the cytoplasm. It carries out the reaction IMP + L-aspartate + GTP = N(6)-(1,2-dicarboxyethyl)-AMP + GDP + phosphate + 2 H(+). It functions in the pathway purine metabolism; AMP biosynthesis via de novo pathway; AMP from IMP: step 1/2. Functionally, plays an important role in the de novo pathway of purine nucleotide biosynthesis. Catalyzes the first committed step in the biosynthesis of AMP from IMP. The polypeptide is Adenylosuccinate synthetase (Rhodopseudomonas palustris (strain HaA2)).